The primary structure comprises 132 residues: Small ribosomal subunit protein uS8 (132 aa).

This sequence belongs to the universal ribosomal protein uS8 family. As to quaternary structure, part of the 30S ribosomal subunit. Contacts proteins S5 and S12.

Its function is as follows. One of the primary rRNA binding proteins, it binds directly to 16S rRNA central domain where it helps coordinate assembly of the platform of the 30S subunit. The polypeptide is Small ribosomal subunit protein uS8 (Sinorhizobium medicae (strain WSM419) (Ensifer medicae)).